Reading from the N-terminus, the 517-residue chain is Benzoate 4-monooxygenase bphA (517 aa).

The helical transmembrane segment at 4–24 (LLLSPYGAYLGLALLVLYYLL) threads the bilayer. N-linked (GlcNAc...) asparagine glycans are attached at residues Asn282 and Asn325. Cys461 contributes to the heme binding site.

This sequence belongs to the cytochrome P450 family. Heme is required as a cofactor.

The protein localises to the membrane. The enzyme catalyses benzoate + reduced [NADPH--hemoprotein reductase] + O2 = 4-hydroxybenzoate + oxidized [NADPH--hemoprotein reductase] + H2O + H(+). Functionally, cytochrome P450 monooxygenase; part of the benzoic acid degradation pathway also known as the protocatechuic acid pathway. Benzoic acid debradation begins with the conversion of benzoic acid into 4-hydroxybenzoic acid through hydroxylation by the benzoate-4-monooxygenase bphA, and its partner NADPH-cytochrome P450 reductase cprA which act as a mediator in electron donation from NADPH. 4-Hydroxybenzoic acid is then converted into 3,4-dihydroxybenzoic acid (also called protocatechuic acid) by the p-hydroxybenzoate-m-hydroxylase phhA. Protocatechuic acid is converted into 3-carboxy-cis,cis-muconic acid by the intradiol ring-cleavage dioxygenase prcA, which is further metabolized through the 3-oxoadipate pathway to finally enter the tricarboxylic acid cycle (TCA). In terms of biological role, responsible for cytochrome P450 dependent benzoate hydroxylation in microsomes; requires cprA as the mediator in electron donation from NADPH. The sequence is that of Benzoate 4-monooxygenase bphA from Aspergillus niger.